The chain runs to 953 residues: Translation initiation factor IF-2 (953 aa).

A disordered region spans residues 53–368 (AKKAVAGTSE…PVTERKFHEL (316 aa)). Composition is skewed to basic and acidic residues over residues 135–151 (FKAEREARAKEQAERRK) and 162–190 (RNDRNDRRNNQNDRNDRNSQNRNDRRNRQ). Over residues 191–214 (EQGNQHRNQGQSQYNQQRQSFNQG) the composition is skewed to low complexity. Basic and acidic residues predominate over residues 236-266 (RSSEERFKQAKANKEALREQNKRKEQAKLED). Residues 274–288 (PKPTAKAPATPAPTA) show a composition bias toward low complexity. Basic and acidic residues predominate over residues 301–318 (ARPDKERDNFDHEEDGPR). The segment covering 332–341 (NQKNSNWNNN) has biased composition (low complexity). A tr-type G domain is found at 455–622 (ERPPVVTIMG…TVLLVAEIQE (168 aa)). The tract at residues 464–471 (GHVDHGKT) is G1. 464-471 (GHVDHGKT) serves as a coordination point for GTP. The tract at residues 489–493 (GITQH) is G2. A G3 region spans residues 510 to 513 (DTPG). GTP is bound by residues 510 to 514 (DTPGH) and 564 to 567 (NKID). The interval 564 to 567 (NKID) is G4. A G5 region spans residues 600–602 (SAK).

The protein belongs to the TRAFAC class translation factor GTPase superfamily. Classic translation factor GTPase family. IF-2 subfamily.

Its subcellular location is the cytoplasm. In terms of biological role, one of the essential components for the initiation of protein synthesis. Protects formylmethionyl-tRNA from spontaneous hydrolysis and promotes its binding to the 30S ribosomal subunits. Also involved in the hydrolysis of GTP during the formation of the 70S ribosomal complex. This is Translation initiation factor IF-2 from Streptococcus gordonii (strain Challis / ATCC 35105 / BCRC 15272 / CH1 / DL1 / V288).